The primary structure comprises 203 residues: GTP cyclohydrolase 1 (203 aa).

Cys-87, His-90, and Cys-158 together coordinate Zn(2+).

It belongs to the GTP cyclohydrolase I family. Homomer.

It carries out the reaction GTP + H2O = 7,8-dihydroneopterin 3'-triphosphate + formate + H(+). It participates in cofactor biosynthesis; 7,8-dihydroneopterin triphosphate biosynthesis; 7,8-dihydroneopterin triphosphate from GTP: step 1/1. The protein is GTP cyclohydrolase 1 of Xylella fastidiosa (strain M23).